Reading from the N-terminus, the 290-residue chain is Flap endonuclease Xni (290 aa).

Mg(2+) is bound at residue D125. The region spanning 181 to 275 (VKTSQLIDFW…DIRLTTSSSA (95 aa)) is the 5'-3' exonuclease domain. K(+)-binding residues include L192, V203, and I206. Residues 205-210 (GIGQVT) form an interaction with DNA region.

Belongs to the Xni family. The cofactor is Mg(2+). K(+) serves as cofactor.

Functionally, has flap endonuclease activity. During DNA replication, flap endonucleases cleave the 5'-overhanging flap structure that is generated by displacement synthesis when DNA polymerase encounters the 5'-end of a downstream Okazaki fragment. This Colwellia psychrerythraea (strain 34H / ATCC BAA-681) (Vibrio psychroerythus) protein is Flap endonuclease Xni.